The sequence spans 500 residues: Trehalose-6-phosphate synthase (500 aa).

Position 28 (R28) interacts with D-glucose 6-phosphate. Residue 48–49 (GG) participates in UDP-alpha-D-glucose binding. The D-glucose 6-phosphate site is built by Y104 and D158. 2 residues coordinate UDP-alpha-D-glucose: R300 and K305. R338 contacts D-glucose 6-phosphate. Residue 403 to 407 (LVAKE) participates in UDP-alpha-D-glucose binding.

The protein belongs to the glycosyltransferase 20 family. As to quaternary structure, homotetramer.

It catalyses the reaction ADP-alpha-D-glucose + D-glucose 6-phosphate = alpha,alpha-trehalose 6-phosphate + ADP + H(+). It carries out the reaction CDP-alpha-D-glucose + D-glucose 6-phosphate = alpha,alpha-trehalose 6-phosphate + CDP + H(+). The enzyme catalyses GDP-alpha-D-glucose + D-glucose 6-phosphate = alpha,alpha-trehalose 6-phosphate + GDP + H(+). The catalysed reaction is TDP-alpha-D-glucose + D-glucose 6-phosphate = 5-methyl-UDP + alpha,alpha-trehalose 6-phosphate + H(+). It catalyses the reaction D-glucose 6-phosphate + UDP-alpha-D-glucose = alpha,alpha-trehalose 6-phosphate + UDP + H(+). Its pathway is glycan biosynthesis; trehalose biosynthesis. Functionally, probably involved in the osmoprotection via the biosynthesis of trehalose and in the production of glycogen and alpha-glucan via the TreS-Pep2 branch involved in the biosynthesis of maltose-1-phosphate (M1P). Catalyzes the transfer of glucose from UDP-glucose (UDP-Glc) to D-glucose 6-phosphate (Glc-6-P) to form trehalose-6-phosphate. Probably also able to use ADP-Glc, CDP-Glc, GDP-Glc and TDP-Glc as glucosyl donors. The chain is Trehalose-6-phosphate synthase from Mycobacterium marinum (strain ATCC BAA-535 / M).